Reading from the N-terminus, the 117-residue chain is Large ribosomal subunit protein bL20 (117 aa).

Belongs to the bacterial ribosomal protein bL20 family.

Functionally, binds directly to 23S ribosomal RNA and is necessary for the in vitro assembly process of the 50S ribosomal subunit. It is not involved in the protein synthesizing functions of that subunit. The polypeptide is Large ribosomal subunit protein bL20 (Roseiflexus sp. (strain RS-1)).